The sequence spans 512 residues: Oxalate--CoA ligase (512 aa).

168–179 contacts ATP; that stretch reads HTSGTTGRPKVV. Ser283 and Ser284 each carry phosphoserine. Residues 381-429 carry the FACS motif; sequence DRFFRTGDEGKLDKDGYVFITGRIKELVNRGGEKISPAEIDAVLMQHPD. Positions 510–512 match the Microbody targeting signal motif; sequence AKL.

Belongs to the ATP-dependent AMP-binding enzyme family.

It is found in the peroxisome matrix. It localises to the peroxisome membrane. The enzyme catalyses oxalate + ATP + CoA = oxalyl-CoA + AMP + diphosphate. Catalyzes the first step in a degradation pathway of oxalate to CO(2) to protect the cell against the harmful effects of oxalate derived from endogenous processes or an environmental sources. The chain is Oxalate--CoA ligase (pcs60) from Schizosaccharomyces pombe (strain 972 / ATCC 24843) (Fission yeast).